A 522-amino-acid chain; its full sequence is MSNRVIIFDTTLRDGEQALAASLSVKEKLQIAMALERLGVDVMEVGFPVSSPGDFESVQTIARTIKNSRVCALSRALEKDIDAAAQALSVADQFRIHTFISTSTIHVESKLKRSFDQVLEMAVGAVKYARRFTDDVEFSCEDAGRTPIDNLCRMVEAAILVGARTINIPDTVGYTVPSEFGTIIQTLFNRVPNIDQAVISVHCHDDLGLSVANSITAVQHGARQIECTINGIGERAGNCSLEEIAMILATRKGMLGLETGINAKEIHRTSNLVSQLCNMPVQANKAIVGANAFTHSSGIHQDGMLKAQNTYEIMTPESIGLNRNNLNMTSRSGRHVIKHRMEEMGYSEHDYNMDALYEEFLKLADKKGQVFDYDLEALAFMEAQAEEDNHYQLQQLVVQSDSTEGVATATVRIEVGGEIKTEAATGNGPVDAAYNAIARATDRRIDIISYKLGAKGVGQNALGQVDITAVYHEQNFHGVGLATDVVEASARALVHVMNLTCRADKVADYKQSMQKNRELGGV.

The Pyruvate carboxyltransferase domain occupies 5–267 (VIIFDTTLRD…ETGINAKEIH (263 aa)). 4 residues coordinate Mn(2+): aspartate 14, histidine 202, histidine 204, and asparagine 238. The interval 392-522 (QLQQLVVQSD…MQKNRELGGV (131 aa)) is regulatory domain.

The protein belongs to the alpha-IPM synthase/homocitrate synthase family. LeuA type 1 subfamily. As to quaternary structure, homodimer. Mn(2+) is required as a cofactor.

The protein resides in the cytoplasm. It carries out the reaction 3-methyl-2-oxobutanoate + acetyl-CoA + H2O = (2S)-2-isopropylmalate + CoA + H(+). Its pathway is amino-acid biosynthesis; L-leucine biosynthesis; L-leucine from 3-methyl-2-oxobutanoate: step 1/4. In terms of biological role, catalyzes the condensation of the acetyl group of acetyl-CoA with 3-methyl-2-oxobutanoate (2-ketoisovalerate) to form 3-carboxy-3-hydroxy-4-methylpentanoate (2-isopropylmalate). This is 2-isopropylmalate synthase from Shewanella baltica (strain OS223).